Here is a 263-residue protein sequence, read N- to C-terminus: Caveolae-associated protein 3 (263 aa).

The tract at residues 1–84 (MGESALEPGP…SNTLAQLLAK (84 aa)) is interaction with CAVIN1. Positions 20–78 (VHAVTVVTLLEKLATMLEALRERQGGLAERQGGLAGSVRRIQSGLGALSRSHDTTSNTL) are leucine-zipper. Phosphoserine occurs at positions 62 and 70. Residue Lys128 forms a Glycyl lysine isopeptide (Lys-Gly) (interchain with G-Cter in SUMO2) linkage. The tract at residues 135 to 203 (ARAFQKAPEL…SSRKGSEAAQ (69 aa)) is interaction with CAV1. Residues 141 to 263 (APELLGPEDQ…RPVLQIESAA (123 aa)) form a disordered region. The span at 157 to 170 (QPEDEVGESSDEEP) shows a compositional bias: acidic residues. 4 positions are modified to phosphoserine: Ser165, Ser166, Ser173, and Ser199. Residues 219 to 234 (EGPAEGQPAAQPAMEP) are compositionally biased toward low complexity.

This sequence belongs to the CAVIN family. As to quaternary structure, component of the CAVIN complex composed of CAVIN1, CAVIN2, CAVIN3 and CAVIN4. Interacts with PRKCD and with phosphatidylserine. Phosphatidylserine may form a bridge between PKC and PKC-binding partners and stabilize the binding. Interacts with PER2. Interacts with CAVIN1 and EPS15L1. Interacts (via leucine-zipper domain) with CAV1 in a cholesterol-sensitive manner. In vitro, phosphorylated by PRKCD.

The protein localises to the cytoplasm. Its subcellular location is the membrane. It localises to the caveola. The protein resides in the cytosol. Functionally, regulates the traffic and/or budding of caveolae. Plays a role in caveola formation in a tissue-specific manner. Required for the formation of caveolae in smooth muscle but not in the lung and heart endothelial cells. Regulates the equilibrium between cell surface-associated and cell surface-dissociated caveolae by promoting the rapid release of caveolae from the cell surface. Plays a role in the regulation of the circadian clock. Modulates the period length and phase of circadian gene expression and also regulates expression and interaction of the core clock components PER1/2 and CRY1/2. Seems to have an immune potentiation function, especially in the glioma. This Rattus norvegicus (Rat) protein is Caveolae-associated protein 3.